A 76-amino-acid polypeptide reads, in one-letter code: DNA polymerase III subunit theta (76 aa).

In terms of assembly, the DNA polymerase holoenzyme is a complex that contains 10 different types of subunits. These subunits are organized into 3 functionally essential subassemblies: the pol III core, the beta sliding clamp processivity factor and the clamp-loading complex. The pol III core (subunits alpha,epsilon and theta) contains the polymerase and the 3'-5' exonuclease proofreading activities. The polymerase is tethered to the template via the sliding clamp processivity factor. The clamp-loading complex assembles the beta processivity factor onto the primer template and plays a central role in the organization and communication at the replication fork. This complex contains delta, delta', psi and chi, and copies of either or both of two different DnaX proteins, gamma and tau. The composition of the holoenzyme is, therefore: (alpha,epsilon,theta)[2]-(gamma/tau)[3]-delta,delta', psi,chi-beta[4].

The enzyme catalyses DNA(n) + a 2'-deoxyribonucleoside 5'-triphosphate = DNA(n+1) + diphosphate. Its function is as follows. DNA polymerase III is a complex, multichain enzyme responsible for most of the replicative synthesis in bacteria. This DNA polymerase also exhibits 3' to 5' exonuclease activity. In terms of biological role, the exact function of the theta subunit is unknown. The sequence is that of DNA polymerase III subunit theta (holE) from Escherichia coli O157:H7.